The following is a 731-amino-acid chain: T-cell activation Rho GTPase-activating protein (731 aa).

A Rho-GAP domain is found at 88–277 (QPLSIICGDS…FLIDNCFEIF (190 aa)). 3 disordered regions span residues 288-421 (TSDD…AEDP), 464-507 (SLDA…IKKH), and 641-662 (HHVEDSRHRGSKEPLPGHGLSP). Polar residues predominate over residues 299–311 (SDVSTLQNDSAYD). Low complexity predominate over residues 319–329 (SNSSSGISSPS). Residues 380-399 (SMPSSQECLESRVTNQTLTK) are compositionally biased toward polar residues. Ser-400 carries the post-translational modification Phosphoserine. A compositionally biased stretch (low complexity) spans 464–480 (SLDASSDSSPVASPSSP). 2 stretches are compositionally biased toward basic and acidic residues: residues 494–503 (KTEKGKPSRE) and 641–652 (HHVEDSRHRGSK).

Functionally, may function as a GTPase-activating protein and may play important roles during T-cell activation. This chain is T-cell activation Rho GTPase-activating protein (TAGAP), found in Homo sapiens (Human).